Reading from the N-terminus, the 490-residue chain is GTPase Der (490 aa).

EngA-type G domains are found at residues 3 to 166 (PVVA…AEAM) and 200 to 373 (IKLA…DSAT). GTP-binding positions include 9-16 (GRPNVGKS), 56-60 (DTGGI), 118-121 (NKVD), 206-213 (GKPNVGKS), 253-257 (DTAGV), and 318-321 (NKWD). One can recognise a KH-like domain in the interval 374–458 (RRVSTSMLTR…PIQIRFQDGG (85 aa)).

The protein belongs to the TRAFAC class TrmE-Era-EngA-EngB-Septin-like GTPase superfamily. EngA (Der) GTPase family. Associates with the 50S ribosomal subunit.

In terms of biological role, GTPase that plays an essential role in the late steps of ribosome biogenesis. This is GTPase Der from Shewanella piezotolerans (strain WP3 / JCM 13877).